Here is a 1163-residue protein sequence, read N- to C-terminus: Rho GTPase-activating protein 45 (1163 aa).

The segment at 1–99 is disordered; the sequence is MFSRKKRELM…KRPTSLSRHA (99 aa). 2 positions are modified to phosphoserine: Ser23 and Ser25. Residues 55-65 are compositionally biased toward basic and acidic residues; the sequence is LPKELPRKDGA. A phosphoserine mark is found at Ser100, Ser120, and Ser126. Disordered stretches follow at residues 118 to 137, 262 to 282, and 454 to 475; these read HRSPLTAASPGELPTEGTGP, PPGDSSQSMESLYGSGSEGTP, and EEEQAGTAPGAGSTATKTLDKR. The 271-residue stretch at 296–566 folds into the F-BAR domain; the sequence is EEVDVLLQRC…SSKLYDPGQQ (271 aa). Residues 403–526 are a coiled coil; that stretch reads EHEKRRKEIK…QIQEVIRQSD (124 aa). The segment covering 458-470 has biased composition (low complexity); that stretch reads AGTAPGAGSTATK. Ser596, Ser605, and Ser619 each carry phosphoserine. The segment at 610–695 is disordered; the sequence is DVAGPEAAGS…VDPEGGAGAS (86 aa). The segment covering 633 to 644 has biased composition (basic residues); the sequence is KGHRAGRGHQVH. Ser646 carries the phosphoserine modification. Residues 673–682 show a composition bias toward low complexity; that stretch reads TSSSGTMSST. The Phorbol-ester/DAG-type zinc-finger motif lies at 729–774; that stretch reads THRLRKLRTPAKCRECNSYVYFQGAECEECCLACHKKCLETLAIQC. In terms of domain architecture, Rho-GAP spans 788-1001; the sequence is QDFSHAARSA…TLIVHYGLVF (214 aa). Phosphoserine is present on residues Ser976, Ser1054, Ser1057, and Ser1059. Disordered regions lie at residues 1042–1067 and 1087–1163; these read AAEDGCRESRVVSNDSDSDLEEASEL and SEAS…PEFV. Residues 1087–1099 are compositionally biased toward low complexity; sequence SEASLEEASGSHS. Positions 1125–1137 are enriched in polar residues; that stretch reads SGFNTNQSNNVLQ.

Its subcellular location is the cytoplasm. It localises to the cell projection. The protein resides in the ruffle membrane. In terms of biological role, contains a GTPase activator for the Rho-type GTPases (RhoGAP) domain that would be able to negatively regulate the actin cytoskeleton as well as cell spreading. However, also contains N-terminally a BAR-domin which is able to play an autoinhibitory effect on this RhoGAP activity. This chain is Rho GTPase-activating protein 45, found in Pongo abelii (Sumatran orangutan).